The primary structure comprises 480 residues: MFS-type transporter oryF (480 aa).

Basic and acidic residues predominate over residues 1–10 (MAEEVNERTR). The disordered stretch occupies residues 1-24 (MAEEVNERTRLLSQSDDPSPSLEE). Low complexity predominate over residues 11-22 (LLSQSDDPSPSL). A run of 12 helical transmembrane segments spans residues 41–61 (LCIAVISVYGLISPVIAAIIV), 81–101 (AFVSVYVLGWSFAPLVVGPLS), 107–127 (ISLLNTGHGLFLVFNALCAFA), 138–158 (FITGAVGSAPLSIGAGIIGDL), 170–190 (LYTLGPLLGPAIAPITGAYIV), 197–217 (AIFAWCSLYILITWVVGLCTL), 264–284 (FLGTQPIIQVLSLFMGYLFGL), 308–328 (ALNYISIAGGFILGSQITGSL), 351–371 (ILMLPAALLVPTGLLIYGWSA), 378–398 (IMPNIGIGIYALGLIMSYQCI), 415–435 (GALTILRSLLGFVLPILAPLI), and 443–463 (WGSSLLALWALVMGGLVPILL).

The protein belongs to the major facilitator superfamily.

The protein localises to the membrane. Its function is as follows. MFS-type transporter; part of the gene cluster that mediates the biosynthesis of oryzines, natural products with an unusual maleidride backbone. The polypeptide is MFS-type transporter oryF (Aspergillus oryzae (strain ATCC 42149 / RIB 40) (Yellow koji mold)).